Reading from the N-terminus, the 44-residue chain is Thaumatin-like protein 5 (44 aa).

The protein belongs to the thaumatin family.

The protein is Thaumatin-like protein 5 of Glebionis coronaria (Crown daisy).